We begin with the raw amino-acid sequence, 96 residues long: Large ribosomal subunit protein uL23 (96 aa).

The protein belongs to the universal ribosomal protein uL23 family. Part of the 50S ribosomal subunit. Contacts protein L29, and trigger factor when it is bound to the ribosome.

Its function is as follows. One of the early assembly proteins it binds 23S rRNA. One of the proteins that surrounds the polypeptide exit tunnel on the outside of the ribosome. Forms the main docking site for trigger factor binding to the ribosome. This chain is Large ribosomal subunit protein uL23, found in Clostridioides difficile (strain 630) (Peptoclostridium difficile).